A 779-amino-acid polypeptide reads, in one-letter code: Anion/proton exchange transporter GEF1 (779 aa).

The Cytoplasmic segment spans residues 1-75 (MPTTYVPINQ…REVIWDRAKT (75 aa)). A helical membrane pass occupies residues 76–96 (FITLSSTAIVIGCIAGFLQVF). Residues 97-154 (TETLVNWKTGHCQRNWLLNKSFCCNGVVNEVTSTSNLLLKRQEFECEAQGLWIAWKGH) lie on the Lumenal side of the membrane. The helical transmembrane segment at 155-175 (VSPFIIFMLLSVLFALISTLL) threads the bilayer. Residues 176–177 (VK) are Cytoplasmic-facing. Residues 178-198 (YVAPMATGSGISEIKVWVSGF) form a helical membrane-spanning segment. Residues 199–203 (EYNKE) lie on the Lumenal side of the membrane. The chain crosses the membrane as a helical span at residues 204 to 224 (FLGFLTLVIKSVALPLAISSG). At 225-264 (LSVGKEGPSVHYATCCGYLLTKWLLRDTLTYSSQYEYITA) the chain is on the cytoplasmic side. Residues 265 to 285 (ASGAGVAVAFGAPIGGVLFGL) form a helical membrane-spanning segment. Residues 286–296 (EEIASANRFNS) are Lumenal-facing. A helical membrane pass occupies residues 297-319 (STLWKSYYVALVAITTLKYIDPF). At 320 to 336 (RNGRVILFNVTYDRDWK) the chain is on the cytoplasmic side. The helical transmembrane segment at 337-357 (VQEIPIFIALGIFGGLYGKYI) threads the bilayer. At 358-369 (SKWNINFIHFRK) the chain is on the lumenal side. A helical transmembrane segment spans residues 370-390 (MYLSSWPVQEVLFLATLTALI). Over 391–436 (SYFNEFLKLDMTESMGILFHECVKNDNTSTFSHRLCQLDENTHAFE) the chain is Cytoplasmic. Residues 437–457 (FLKIFTSLCFATVIRALLVVV) traverse the membrane as a helical segment. The Lumenal portion of the chain corresponds to 458-465 (SYGARVPA). Residues 466-486 (GIFVPSMAVGATFGRAVSLLV) traverse the membrane as a helical segment. Over 487–500 (ERFISGPSVITPGA) the chain is Cytoplasmic. Residues 501 to 523 (YAFLGAAATLSGITNLTLTVVVI) traverse the membrane as a helical segment. Over 524–529 (MFELTG) the chain is Lumenal. The helical transmembrane segment at 530-552 (AFMYIIPLMIVVAITRIILSTSG) threads the bilayer. Residues 553–779 (ISGGIADQMI…FTTNRNGNVI (227 aa)) lie on the Cytoplasmic side of the membrane. 2 CBS domains span residues 591 to 659 (MSSK…VNST) and 688 to 744 (MNES…YREV).

This sequence belongs to the chloride channel (TC 2.A.49) family. In terms of assembly, homodimer. Interacts with GET3. Proteolytically processed in the secretory pathway by protease KEX2 within the first extracellular loop. However, both the N- and C-terminal products of the cleavage reaction are required for assembly of a functional channel.

Its subcellular location is the golgi apparatus membrane. It localises to the endosome membrane. The protein resides in the prevacuolar compartment membrane. Functionally, anion/proton exchange transporter involved in iron and copper cation homeostasis. Involved in intracellular iron metabolism during growth on fermentable and non fermentable carbon sources. Required for proper copper-loading and maturation of multicopper oxidase FET3. Important for adjusting intracellular compartment pH to more alkaline pH under iron limitation. May also transport chloride ions through the plasma membrane. This is Anion/proton exchange transporter GEF1 (GEF1) from Saccharomyces cerevisiae (strain ATCC 204508 / S288c) (Baker's yeast).